The chain runs to 496 residues: Fusarielin biosynthesis cluster transcription factor FSL7 (496 aa).

The segment at residues 16–46 is a DNA-binding region (zn(2)-C6 fungal-type); sequence CDRCHELKIRCTRTGGTESRCDRCEKNDIDC. Disordered regions lie at residues 57-102, 189-224, 281-307, 348-379, and 444-470; these read PKSQ…SINS, RSIN…EDQM, ANHT…QSRS, GSTS…KPRT, and MTRE…AQAA. 2 stretches are compositionally biased toward polar residues: residues 65 to 89 and 207 to 218; these read GPNT…QEQM and ELQSTQSASGSP. Low complexity predominate over residues 281-294; the sequence is ANHTSSSSSSNSTT. Residues 355–379 are compositionally biased toward polar residues; it reads YNDTTAHPSSASLPSQTGGPTKPRT. The segment covering 444 to 460 has biased composition (basic and acidic residues); the sequence is MTREQHVSTGHGPDRHT.

It is found in the nucleus. In terms of biological role, transcription regulator that specifically up-regulates the gene cluster that mediates the biosynthesis of fusarielins F, G and H, decaketide compounds with 5 methylations and a decaline core that act as mycoestrogens as they stimulate growth of MCF-7 breast cancer cells. Probably binds the 5'-CGGNNNCCG-3' motif present in the promoter of all the cluster genes. This Gibberella zeae (strain ATCC MYA-4620 / CBS 123657 / FGSC 9075 / NRRL 31084 / PH-1) (Wheat head blight fungus) protein is Fusarielin biosynthesis cluster transcription factor FSL7.